The chain runs to 65 residues: Large ribosomal subunit protein bL35 (65 aa).

The segment at 1-20 is disordered; sequence MPKMKTNSGSKKRFTLTGTG.

This sequence belongs to the bacterial ribosomal protein bL35 family.

This is Large ribosomal subunit protein bL35 from Bacteroides thetaiotaomicron (strain ATCC 29148 / DSM 2079 / JCM 5827 / CCUG 10774 / NCTC 10582 / VPI-5482 / E50).